We begin with the raw amino-acid sequence, 370 residues long: 4-hydroxy-3-methylbut-2-en-1-yl diphosphate synthase (flavodoxin) (370 aa).

Residues Cys-271, Cys-274, Cys-306, and Glu-313 each contribute to the [4Fe-4S] cluster site.

Belongs to the IspG family. The cofactor is [4Fe-4S] cluster.

It catalyses the reaction (2E)-4-hydroxy-3-methylbut-2-enyl diphosphate + oxidized [flavodoxin] + H2O + 2 H(+) = 2-C-methyl-D-erythritol 2,4-cyclic diphosphate + reduced [flavodoxin]. Its pathway is isoprenoid biosynthesis; isopentenyl diphosphate biosynthesis via DXP pathway; isopentenyl diphosphate from 1-deoxy-D-xylulose 5-phosphate: step 5/6. Converts 2C-methyl-D-erythritol 2,4-cyclodiphosphate (ME-2,4cPP) into 1-hydroxy-2-methyl-2-(E)-butenyl 4-diphosphate. The sequence is that of 4-hydroxy-3-methylbut-2-en-1-yl diphosphate synthase (flavodoxin) from Actinobacillus pleuropneumoniae serotype 5b (strain L20).